The chain runs to 94 residues: MNEQINEQIEFGEKYVKINDKFFYMSTENVEFIQWWYERFGHIKGIQFMEKLVKLFIIAKPEDYNDQWYVLDILKKHEKEISPLINLIYSNYEK.

This is an uncharacterized protein from Saccharolobus islandicus (Sulfolobus islandicus).